We begin with the raw amino-acid sequence, 268 residues long: Shikimate dehydrogenase (NADP(+)) (268 aa).

Shikimate-binding positions include serine 14–serine 16 and threonine 61. Lysine 65 functions as the Proton acceptor in the catalytic mechanism. Residues asparagine 86 and aspartate 102 each coordinate shikimate. NADP(+) is bound by residues glycine 126–alanine 130, asparagine 149–lysine 154, and methionine 213. Residue tyrosine 215 participates in shikimate binding. Position 238 (glycine 238) interacts with NADP(+).

It belongs to the shikimate dehydrogenase family. Homodimer.

The enzyme catalyses shikimate + NADP(+) = 3-dehydroshikimate + NADPH + H(+). Its pathway is metabolic intermediate biosynthesis; chorismate biosynthesis; chorismate from D-erythrose 4-phosphate and phosphoenolpyruvate: step 4/7. Functionally, involved in the biosynthesis of the chorismate, which leads to the biosynthesis of aromatic amino acids. Catalyzes the reversible NADPH linked reduction of 3-dehydroshikimate (DHSA) to yield shikimate (SA). This is Shikimate dehydrogenase (NADP(+)) from Haemophilus influenzae (strain PittEE).